The following is a 177-amino-acid chain: Tumor necrosis factor ligand superfamily member 18 (177 aa).

Topologically, residues 1-27 (MCLSHLENMPLSHSRTQGAQRSSWKLW) are cytoplasmic. A helical; Signal-anchor for type II membrane protein transmembrane segment spans residues 28–48 (LFCSIVMLLFLCSFSWLIFIF). Positions 47 to 170 (IFLQLETAKE…NNTYWGIILL (124 aa)) constitute a THD domain. Topologically, residues 49 to 177 (LQLETAKEPC…ILLANPQFIS (129 aa)) are extracellular. An intrachain disulfide couples cysteine 58 to cysteine 78. N-linked (GlcNAc...) asparagine glycans are attached at residues asparagine 129 and asparagine 161.

This sequence belongs to the tumor necrosis factor family. Homodimer. Homotrimer. As to expression, expressed at high levels in the small intestine, ovary, testis, kidney and endothelial cells.

Its subcellular location is the cell membrane. Functionally, cytokine that binds to TNFRSF18/AITR/GITR. Regulates T-cell responses. Can function as costimulator and lower the threshold for T-cell activation and T-cell proliferation. Important for interactions between activated T-lymphocytes and endothelial cells. Mediates activation of NF-kappa-B. Triggers increased phosphorylation of STAT1 and up-regulates expression of VCAM1 and ICAM1. Promotes leukocyte adhesion to endothelial cells. Regulates migration of monocytes from the splenic reservoir to sites of inflammation. This chain is Tumor necrosis factor ligand superfamily member 18, found in Homo sapiens (Human).